Reading from the N-terminus, the 408-residue chain is Peptidase T (408 aa).

Histidine 78 serves as a coordination point for Zn(2+). Aspartate 80 is an active-site residue. Residue aspartate 140 participates in Zn(2+) binding. The Proton acceptor role is filled by glutamate 173. Glutamate 174, aspartate 196, and histidine 379 together coordinate Zn(2+).

This sequence belongs to the peptidase M20B family. Zn(2+) serves as cofactor.

The protein localises to the cytoplasm. It catalyses the reaction Release of the N-terminal residue from a tripeptide.. Cleaves the N-terminal amino acid of tripeptides. The protein is Peptidase T of Salmonella arizonae (strain ATCC BAA-731 / CDC346-86 / RSK2980).